The primary structure comprises 428 residues: Glutamyl-tRNA reductase (428 aa).

Substrate is bound by residues 49-52 (TCNR), serine 109, 114-116 (EGQ), and glutamine 120. Cysteine 50 acts as the Nucleophile in catalysis. 189–194 (GAGKMS) is a binding site for NADP(+).

It belongs to the glutamyl-tRNA reductase family. As to quaternary structure, homodimer.

The catalysed reaction is (S)-4-amino-5-oxopentanoate + tRNA(Glu) + NADP(+) = L-glutamyl-tRNA(Glu) + NADPH + H(+). It participates in porphyrin-containing compound metabolism; protoporphyrin-IX biosynthesis; 5-aminolevulinate from L-glutamyl-tRNA(Glu): step 1/2. The protein operates within porphyrin-containing compound metabolism; chlorophyll biosynthesis. Functionally, catalyzes the NADPH-dependent reduction of glutamyl-tRNA(Glu) to glutamate 1-semialdehyde (GSA). The chain is Glutamyl-tRNA reductase from Microcystis aeruginosa (strain NIES-843 / IAM M-2473).